Consider the following 184-residue polypeptide: MMSFLLGAILTLLWAPTAQAEVLLQPDFNAEKFSGLWYVVSMASDCRVFLGKKDHLSMSTRAIRPTEEGGLHVHMEFPGADGCNQVDAEYLKVGSEGHFRVPALGYLDVRIVDTDYSSFAVLYIYKELEGALSTMVQLYSRTQDVSPQALKSFQDFYPTLGLPKDMMVMLPQSDACNPESKEAP.

Positions M1 to A20 are cleaved as a signal peptide. A disulfide bridge connects residues C83 and C176.

It belongs to the calycin superfamily. Lipocalin family.

It is found in the secreted. In Homo sapiens (Human), this protein is Lipocalin-15 (LCN15).